The primary structure comprises 218 residues: 3-dehydroquinate dehydratase (218 aa).

Residues 29–31 (EFR) and Arg-56 contribute to the 3-dehydroquinate site. The Proton donor/acceptor role is filled by His-116. Lys-142 acts as the Schiff-base intermediate with substrate in catalysis. 3-dehydroquinate is bound by residues Arg-180, Ser-200, and Gln-204.

The protein belongs to the type-I 3-dehydroquinase family. Homodimer.

It carries out the reaction 3-dehydroquinate = 3-dehydroshikimate + H2O. It functions in the pathway metabolic intermediate biosynthesis; chorismate biosynthesis; chorismate from D-erythrose 4-phosphate and phosphoenolpyruvate: step 3/7. Its function is as follows. Involved in the third step of the chorismate pathway, which leads to the biosynthesis of aromatic amino acids. Catalyzes the cis-dehydration of 3-dehydroquinate (DHQ) and introduces the first double bond of the aromatic ring to yield 3-dehydroshikimate. The protein is 3-dehydroquinate dehydratase of Methanococcus maripaludis (strain C5 / ATCC BAA-1333).